Consider the following 228-residue polypeptide: Probable septum site-determining protein MinC (228 aa).

The protein belongs to the MinC family. In terms of assembly, interacts with MinD and FtsZ.

Functionally, cell division inhibitor that blocks the formation of polar Z ring septums. Rapidly oscillates between the poles of the cell to destabilize FtsZ filaments that have formed before they mature into polar Z rings. Prevents FtsZ polymerization. The protein is Probable septum site-determining protein MinC of Bacillus mycoides (strain KBAB4) (Bacillus weihenstephanensis).